The following is a 353-amino-acid chain: Histidinol-phosphate aminotransferase (353 aa).

Position 211 is an N6-(pyridoxal phosphate)lysine (K211).

This sequence belongs to the class-II pyridoxal-phosphate-dependent aminotransferase family. Histidinol-phosphate aminotransferase subfamily. Homodimer. It depends on pyridoxal 5'-phosphate as a cofactor.

It catalyses the reaction L-histidinol phosphate + 2-oxoglutarate = 3-(imidazol-4-yl)-2-oxopropyl phosphate + L-glutamate. The protein operates within amino-acid biosynthesis; L-histidine biosynthesis; L-histidine from 5-phospho-alpha-D-ribose 1-diphosphate: step 7/9. The polypeptide is Histidinol-phosphate aminotransferase (Marinomonas sp. (strain MWYL1)).